We begin with the raw amino-acid sequence, 237 residues long: Mediator of RNA polymerase II transcription subunit 20 (237 aa).

This sequence belongs to the Mediator complex subunit 20 family. In terms of assembly, component of the Mediator complex.

The protein localises to the nucleus. In terms of biological role, component of the Mediator complex, a coactivator involved in the regulated transcription of nearly all RNA polymerase II-dependent genes. Mediator functions as a bridge to convey information from gene-specific regulatory proteins to the basal RNA polymerase II transcription machinery. Mediator is recruited to promoters by direct interactions with regulatory proteins and serves as a scaffold for the assembly of a functional preinitiation complex with RNA polymerase II and the general transcription factors. This Scheffersomyces stipitis (strain ATCC 58785 / CBS 6054 / NBRC 10063 / NRRL Y-11545) (Yeast) protein is Mediator of RNA polymerase II transcription subunit 20 (SRB2).